Reading from the N-terminus, the 206-residue chain is MASQKKQLFKIIILGDSGVGKTSLMNQYVNARFTQQYRATVGADFMAKEVMIDDRMVTLQIWDTAGQERFQSLGGAFYRGADCCVLVYDITNPKSFDSLDSWRDEFLMQGQPKDPEHFPFVVLGNKLDKATERKVQESKAQQWCKSHGNIQFFEVSAKDATNIEQAFQDIAKAAASQEKDEEIFFPTTVTLTKQSQKPQAKQGGCC.

GTP is bound at residue 15-22; that stretch reads GDSGVGKT. Phosphoserine occurs at positions 17 and 23. Thr-34, Thr-40, and Thr-64 each carry phosphothreonine. GTP-binding positions include 34-40 and 63-67; these read TQQYRAT and DTAGQ. Positions 37-45 match the Effector region motif; it reads YRATVGADF. At Ser-72 the chain carries Phosphoserine. A phosphotyrosine mark is found at Tyr-78 and Tyr-88. GTP-binding positions include 125 to 128 and 157 to 158; these read NKLD and AK. 2 S-geranylgeranyl cysteine lipidation sites follow: Cys-205 and Cys-206.

This sequence belongs to the small GTPase superfamily. Rab family.

The protein resides in the cytoplasmic vesicle. The protein localises to the phagosome membrane. Its subcellular location is the late endosome membrane. It localises to the lysosome membrane. It is found in the autophagosome membrane. The protein resides in the lipid droplet. The enzyme catalyses GTP + H2O = GDP + phosphate + H(+). Functionally, small GTPase which cycles between active GTP-bound and inactive GDP-bound states. In its active state, binds to a variety of effector proteins playing a key role in the regulation of endo-lysosomal trafficking. Governs early-to-late endosomal maturation, microtubule minus-end as well as plus-end directed endosomal migration and positioning, and endosome-lysosome transport through different protein-protein interaction cascades. Involved in lipophagy, a cytosolic lipase-independent autophagic pathway. Plays a role in phagocyte formation and acidification. The protein is Ras-related protein Rab-7a of Paramecium octaurelia.